The chain runs to 105 residues: U-scoloptoxin(05)-Ssd1a (105 aa).

The first 24 residues, 1-24 (MKEAVKMSCLCIFVFLFLFSLTDA), serve as a signal peptide directing secretion. Residues 79-105 (HVPESNQKDGKVSTHMSSCNTDGCNAN) form a disordered region. Residues 92–105 (THMSSCNTDGCNAN) show a composition bias toward polar residues.

Belongs to the scoloptoxin-05 family. Contains 4 disulfide bonds. In terms of tissue distribution, expressed by the venom gland.

It is found in the secreted. The sequence is that of U-scoloptoxin(05)-Ssd1a from Scolopendra dehaani (Thai centipede).